The following is a 141-amino-acid chain: PBKALITGFWSKVKVBZVGAZALGRLLVVYPWTZRFFZHFGBLSSABAVMBBAKVKAHGKKVLBSFSBGLKHLBBLKGAFASLSZLHCBKLHVBPZBFRLLGBVLVVVLARHFGKZFBPZLZAZFZKVVAGVASALAHRYH.

Residues 1 to 141 (PBKALITGFW…VASALAHRYH (141 aa)) form the Globin domain. 2 residues coordinate heme b: His-58 and His-87.

This sequence belongs to the globin family. As to quaternary structure, heterotetramer of two alpha chains and two beta chains. Red blood cells.

In terms of biological role, involved in oxygen transport from the lung to the various peripheral tissues. This Ammotragus lervia (Barbary sheep) protein is Hemoglobin subunit beta-C(NA).